Consider the following 416-residue polypeptide: MTQQHPLVRLVNSTSLVSQILVGLVFGILLAMFMPEWAKTAGLLGSLFVGALKAVAPLLVFVLVMAAIIGHKQGQKTNMKPILLLYLLGTFLAAAVAVVASFLFPSNLHLVANSAEITPPGGITEVLQTLLFNVVTNPVKALLDANYIGILAWAIGLGIAMRHASEGTKAVITDLSHGVSTIVKAVIRCAPLGILGLVASTLAETGFDALFGYAQLLVVLIGCMLFIAFVVNPLIVFWKIKRNPYPLVLTCLKESGVTAFFTRSSAANIPVNMALAEKLRLPEDTYAVSIPLGATINMAGAAITITVLSMAAVHTLGMEVDLATAILLSVVATISACGASGVAGGSLLLIPLACSLFGISNDIAMQVVAVGFIIGVLQDSAETALNSSTDVLFTAAACMAEDETLLDAAPVPNSEA.

Transmembrane regions (helical) follow at residues 15–35 (SLVS…MFMP), 49–69 (VGAL…AAII), 82–102 (ILLL…VASF), 141–161 (ALLD…GIAM), 192–212 (LGIL…ALFG), 217–237 (LVVL…LIVF), 288–308 (VSIP…ITVL), 316–336 (LGME…TISA), and 363–383 (IAMQ…SAET).

This sequence belongs to the dicarboxylate/amino acid:cation symporter (DAACS) (TC 2.A.23) family.

The protein resides in the cell inner membrane. It catalyses the reaction L-serine(in) + Na(+)(in) = L-serine(out) + Na(+)(out). It carries out the reaction L-threonine(in) + Na(+)(in) = L-threonine(out) + Na(+)(out). Its function is as follows. Involved in the import of serine and threonine into the cell, with the concomitant import of sodium (symport system). In Aeromonas hydrophila subsp. hydrophila (strain ATCC 7966 / DSM 30187 / BCRC 13018 / CCUG 14551 / JCM 1027 / KCTC 2358 / NCIMB 9240 / NCTC 8049), this protein is Serine/threonine transporter SstT.